Here is a 121-residue protein sequence, read N- to C-terminus: Small ribosomal subunit protein bS6 (121 aa).

It belongs to the bacterial ribosomal protein bS6 family.

Binds together with bS18 to 16S ribosomal RNA. The sequence is that of Small ribosomal subunit protein bS6 from Rickettsia peacockii (strain Rustic).